A 447-amino-acid polypeptide reads, in one-letter code: NADP-specific glutamate dehydrogenase (447 aa).

Residues Lys92, Gln113, and Lys116 each coordinate substrate. Lys128 serves as the catalytic Proton donor. Gly167 contacts substrate. 2 residues coordinate NADP(+): Thr212 and Asn243. Substrate is bound at residue Ser379.

It belongs to the Glu/Leu/Phe/Val dehydrogenases family. Homohexamer.

The enzyme catalyses L-glutamate + NADP(+) + H2O = 2-oxoglutarate + NH4(+) + NADPH + H(+). Its function is as follows. Catalyzes the reversible oxidative deamination of glutamate to alpha-ketoglutarate and ammonia. The chain is NADP-specific glutamate dehydrogenase (gdh) from Corynebacterium glutamicum (strain ATCC 13032 / DSM 20300 / JCM 1318 / BCRC 11384 / CCUG 27702 / LMG 3730 / NBRC 12168 / NCIMB 10025 / NRRL B-2784 / 534).